The chain runs to 88 residues: Small ribosomal subunit protein uS19 (88 aa).

Belongs to the universal ribosomal protein uS19 family.

Its function is as follows. Protein S19 forms a complex with S13 that binds strongly to the 16S ribosomal RNA. The protein is Small ribosomal subunit protein uS19 of Chlamydia abortus (strain DSM 27085 / S26/3) (Chlamydophila abortus).